A 92-amino-acid chain; its full sequence is UPF0250 protein Rmag_0541 (92 aa).

The protein belongs to the UPF0250 family.

This chain is UPF0250 protein Rmag_0541, found in Ruthia magnifica subsp. Calyptogena magnifica.